Reading from the N-terminus, the 514-residue chain is AAA-ATPase ASD, mitochondrial (514 aa).

A helical membrane pass occupies residues 7 to 24 (VWTNTGSALASLVFIYTI). ATP is bound at residue 250–257 (GPPGTGKS). Disordered regions lie at residues 311–342 (GQRK…ENKG) and 467–514 (KEEA…TMKD). Composition is skewed to basic and acidic residues over residues 331-342 (KQMKKDQGENKG) and 467-502 (KEEA…KEEK).

Belongs to the AAA ATPase family. BCS1 subfamily. Requires Mg(2+) as cofactor. In terms of tissue distribution, expressed in seeds, specifically in the embryo.

It is found in the mitochondrion membrane. It catalyses the reaction ATP + H2O = ADP + phosphate + H(+). Required to regulate morphology and anatomy during seed maturation. The polypeptide is AAA-ATPase ASD, mitochondrial (AATP1) (Arabidopsis thaliana (Mouse-ear cress)).